The primary structure comprises 543 residues: ABC transport system permease protein p69 (543 aa).

12 helical membrane passes run 18–38, 78–98, 115–135, 141–161, 211–231, 237–257, 288–308, 354–374, 379–399, 413–433, 482–502, and 510–530; these read IWYW…YSWI, AFFV…FSYW, ITIV…SNLF, ATLT…TTFF, TLLS…PLSI, LVLI…VVVF, IIFI…LVTI, ISLI…SCNL, FSIS…ILLF, IILV…SINF, LILF…NFFE, and GSVT…FLSV. One can recognise an ABC transmembrane type-1 domain in the interval 74-256; the sequence is LAQTAFFVTG…TFLIFIEVVV (183 aa).

The protein belongs to the binding-protein-dependent transport system permease family.

The protein localises to the cell membrane. Functionally, probably part of a high-affinity transport system. This is ABC transport system permease protein p69 (p69) from Mycoplasma genitalium (strain ATCC 33530 / DSM 19775 / NCTC 10195 / G37) (Mycoplasmoides genitalium).